The sequence spans 449 residues: UDP-N-acetylmuramoylalanine--D-glutamate ligase (449 aa).

ATP is bound at residue 118 to 124; the sequence is GTNGKTT.

It belongs to the MurCDEF family.

Its subcellular location is the cytoplasm. It carries out the reaction UDP-N-acetyl-alpha-D-muramoyl-L-alanine + D-glutamate + ATP = UDP-N-acetyl-alpha-D-muramoyl-L-alanyl-D-glutamate + ADP + phosphate + H(+). It participates in cell wall biogenesis; peptidoglycan biosynthesis. Its function is as follows. Cell wall formation. Catalyzes the addition of glutamate to the nucleotide precursor UDP-N-acetylmuramoyl-L-alanine (UMA). This chain is UDP-N-acetylmuramoylalanine--D-glutamate ligase, found in Staphylococcus epidermidis (strain ATCC 12228 / FDA PCI 1200).